The chain runs to 766 residues: Discoidin domain-containing receptor A (766 aa).

The N-terminal stretch at methionine 1–threonine 18 is a signal peptide. Residues leucine 19–leucine 372 are Extracellular-facing. 2 F5/8 type C domains span residues cysteine 24–cysteine 180 and serine 195–alanine 351. Cysteine 24 and cysteine 180 are joined by a disulfide. Asparagine 87, asparagine 103, asparagine 129, asparagine 242, asparagine 268, asparagine 311, and asparagine 353 each carry an N-linked (GlcNAc...) asparagine glycan. A helical transmembrane segment spans residues leucine 373–valine 393. Residues cysteine 394–aspartate 766 lie on the Cytoplasmic side of the membrane. The segment at asparagine 475–serine 501 is disordered. The segment covering tyrosine 488–serine 501 has biased composition (polar residues). The 248-residue stretch at leucine 519–aspartate 766 folds into the Protein kinase domain. ATP is bound by residues isoleucine 525–isoleucine 533 and lysine 547.

It belongs to the protein kinase superfamily. Tyr protein kinase family. Insulin receptor subfamily. Expressed in neurons in head and tail, some motoneurons in ventral nerve cord, in PVP interneurons, pharynx and stomato-intestinal muscle.

The protein localises to the cell membrane. It is found in the cell projection. It localises to the axon. Its subcellular location is the perikaryon. Receptor which, together with svh-4, is involved in axon guidance to establish the tracts for the ventral and dorsal nerve cords during nervous system development. May play a role in axon regeneration following injury in D-type motor neurons. The chain is Discoidin domain-containing receptor A from Caenorhabditis elegans.